The chain runs to 443 residues: MLKSAKGTWITDWNPEDPKRWDPALAWRTLWITTFNLTLSFITWYVVSALVVRLPKVGFELSTTQLFWLTAMPGLAGGTLRIIWTFLPPILGTRHLVTFSTLLLLIPLLGWGFAVQNTGTPYWVLLLLAFLAGIGGGHFSGYMPSTSYFFPKRLQGTALGLQAGIGNFGVSIVQFVTPWIIGFALFGSLLGGPQTFTPKPGVSQPIWLQNATFAWVPFVLLGALLAWVYLRSVPIRANFREQFDIFRDKHTWIMTSLYIMTFGSFSGFSAIFPLLIREVYGKFEGAPDPLRYAFLGPLVGSLARVIAGPISDRLGGAIVTQVSAIGIFLSALLVTLYTRPTSLDQFPMFVVAMLLIFFFSGVGNASTFKQMPMIFPPRQAGGVIGWTAAVAAYGPFLFSTLAAYTQQATGGFTAFFYGLMVFYAFNFFLNWYYYARKGAEKPC.

The next 12 helical transmembrane spans lie at 32–52, 66–86, 95–115, 123–143, 172–192, 210–230, 256–276, 292–312, 314–334, 346–366, 383–403, and 409–429; these read ITTF…ALVV, LFWL…IWTF, HLVT…GFAV, WVLL…SGYM, IVQF…LLGG, NATF…WVYL, SLYI…PLLI, YAFL…PISD, LGGA…ALLV, FPMF…GNAS, VIGW…TLAA, and TGGF…NFFL.

It belongs to the major facilitator superfamily. Nitrate/nitrite porter (TC 2.A.1.8) family.

It localises to the cell membrane. The enzyme catalyses nitrate(in) + nitrite(out) = nitrate(out) + nitrite(in). In terms of biological role, probable nitrate/nitrite antiporter that may be involved in nitrate import and nitrite export during anaerobic growth. In Thermus thermophilus, this protein is Probable nitrate/nitrite antiporter NarK2.